The primary structure comprises 208 residues: NAD-dependent protein deacylase (208 aa).

One can recognise a Deacetylase sirtuin-type domain in the interval 1-208 (MKPICVVLSG…NTGFNPVTGW (208 aa)). 10–29 (GAGISAESGIPTYRAEDGLW) lines the NAD(+) pocket. Tyrosine 54 and arginine 57 together coordinate substrate. 87–90 (QNVE) contacts NAD(+). Residue histidine 105 is the Proton acceptor of the active site. Residues 170 to 172 (GTS) and 197 to 199 (NPN) contribute to the NAD(+) site.

It belongs to the sirtuin family. Class III subfamily.

The protein localises to the cytoplasm. It carries out the reaction N(6)-acetyl-L-lysyl-[protein] + NAD(+) + H2O = 2''-O-acetyl-ADP-D-ribose + nicotinamide + L-lysyl-[protein]. The catalysed reaction is N(6)-succinyl-L-lysyl-[protein] + NAD(+) + H2O = 2''-O-succinyl-ADP-D-ribose + nicotinamide + L-lysyl-[protein]. In terms of biological role, NAD-dependent lysine deacetylase and desuccinylase that specifically removes acetyl and succinyl groups on target proteins. Modulates the activities of several proteins which are inactive in their acylated form. The protein is NAD-dependent protein deacylase of Aggregatibacter actinomycetemcomitans (Actinobacillus actinomycetemcomitans).